The sequence spans 310 residues: Protoheme IX farnesyltransferase 2 (310 aa).

The next 9 membrane-spanning stretches (helical) occupy residues 21 to 41, 46 to 66, 99 to 119, 125 to 145, 153 to 173, 180 to 200, 226 to 246, 256 to 276, and 284 to 304; these read IWYLLVFTAFGAAVAASGIYG, IATWALMLFSVAAGSASANVL, FGLFLAGASMVMAACIALTTT, WAAAFIAFGLFNNVLVYSYML, IVLGGLCGGMPPMIGWVAVTT, GLVMGGLVFIWTPMHIWALTL, VIAVSTVAMALFSLAPLLITL, VYLATAAASGALIIALSAWVV, and AWVLFKFSSPYLAVLFIALMV.

This sequence belongs to the UbiA prenyltransferase family. Protoheme IX farnesyltransferase subfamily.

It localises to the cell membrane. It carries out the reaction heme b + (2E,6E)-farnesyl diphosphate + H2O = Fe(II)-heme o + diphosphate. It functions in the pathway porphyrin-containing compound metabolism; heme O biosynthesis; heme O from protoheme: step 1/1. Its function is as follows. Converts heme B (protoheme IX) to heme O by substitution of the vinyl group on carbon 2 of heme B porphyrin ring with a hydroxyethyl farnesyl side group. This chain is Protoheme IX farnesyltransferase 2, found in Cenarchaeum symbiosum (strain A).